Reading from the N-terminus, the 477-residue chain is Membrane-bound lytic murein transglycosylase F (477 aa).

An N-terminal signal peptide occupies residues 1-22 (MTRFLLIIILGFLLTACQQVTV). The tract at residues 23 to 257 (DEPEFVPHQL…HLNEKYFGHV (235 aa)) is non-LT domain. Positions 258-477 (KRFDYIDTRA…AGSLSPDQPK (220 aa)) are LT domain. Residue glutamate 302 is part of the active site. The interval 446 to 477 (SKQPMPEDEQNDLIAEELPSMPAGSLSPDQPK) is disordered. Residues 451–460 (PEDEQNDLIA) are compositionally biased toward acidic residues.

In the N-terminal section; belongs to the bacterial solute-binding protein 3 family. This sequence in the C-terminal section; belongs to the transglycosylase Slt family.

It is found in the cell outer membrane. It carries out the reaction Exolytic cleavage of the (1-&gt;4)-beta-glycosidic linkage between N-acetylmuramic acid (MurNAc) and N-acetylglucosamine (GlcNAc) residues in peptidoglycan, from either the reducing or the non-reducing ends of the peptidoglycan chains, with concomitant formation of a 1,6-anhydrobond in the MurNAc residue.. Its function is as follows. Murein-degrading enzyme that degrades murein glycan strands and insoluble, high-molecular weight murein sacculi, with the concomitant formation of a 1,6-anhydromuramoyl product. Lytic transglycosylases (LTs) play an integral role in the metabolism of the peptidoglycan (PG) sacculus. Their lytic action creates space within the PG sacculus to allow for its expansion as well as for the insertion of various structures such as secretion systems and flagella. This is Membrane-bound lytic murein transglycosylase F from Shewanella sp. (strain W3-18-1).